A 149-amino-acid chain; its full sequence is Large ribosomal subunit protein uL24 (149 aa).

Belongs to the universal ribosomal protein uL24 family. Part of the 50S ribosomal subunit.

In terms of biological role, one of two assembly initiator proteins, it binds directly to the 5'-end of the 23S rRNA, where it nucleates assembly of the 50S subunit. One of the proteins that surrounds the polypeptide exit tunnel on the outside of the subunit. The sequence is that of Large ribosomal subunit protein uL24 from Nostoc sp. (strain PCC 7120 / SAG 25.82 / UTEX 2576).